The following is a 525-amino-acid chain: MKALIAALLLITLQYSCAVSPTDCSAVEPEAEKALDLINKRRRDGYLFQLLRIADAHLDRVENTTVYYLVLDVQESDCSVLSRKYWNDCEPPDSRRPSEIVIGQCKVIATRHSHESQDLRVIDFNCTTSSVSSALANTKDSPVLIDFFEDTERYRKQANKALEKYKEENDDFASFRVDRIERVARVRGGEGTGYFVDFSVRNCPRHHFPRHPNVFGFCRADLFYDVEALDLESPKNLVINCEVFDPQEHENINGVPPHLGHPFHWGGHERSSTTKPPFKPHGSRDHHHPHKPHEHGPPPPPDERDHSHGPPLPQGPPPLLPMSCSSCQHATFGTNGAQRHSHNNNSSDLHPHKHHSHEQHPHGHHPHAHHPHEHDTHRQHPHGHHPHGHHPHGHHPHGHHPHGHHPHCHDFQDYGPCDPPPHNQGHCCHGHGPPPGHLRRRGPGKGPRPFHCRQIGSVYRLPPLRKGEVLPLPEANFPSFPLPHHKHPLKPDNQPFPQSVSESCPGKFKSGFPQVSMFFTHTFPK.

The first 18 residues, 1–18 (MKALIAALLLITLQYSCA), serve as a signal peptide directing secretion. 2 consecutive Cystatin domains span residues 19–136 (VSPT…SALA) and 137–254 (NTKD…NING). 5 cysteine pairs are disulfide-bonded: Cys-24–Cys-504, Cys-78–Cys-89, Cys-105–Cys-126, Cys-203–Cys-417, and Cys-218–Cys-241. The segment at 41–84 (RRRDGYLFQLLRIADAHLDRVENTTVYYLVLDVQESDCSVLSRK) is interaction with ATP5F1A. Asn-63 is a glycosylation site (N-linked (GlcNAc...) asparagine). Residue Asn-125 is glycosylated (N-linked (GlcNAc...) asparagine). The interval 252–407 (INGVPPHLGH…GHHPHGHHPH (156 aa)) is disordered. Basic residues predominate over residues 284-293 (RDHHHPHKPH). A compositionally biased stretch (pro residues) spans 310–320 (PPLPQGPPPLL). Residues 323–348 (SCSSCQHATFGTNGAQRHSHNNNSSD) are compositionally biased toward polar residues. 2 N-linked (GlcNAc...) asparagine glycosylation sites follow: Asn-344 and Asn-345. The interval 348–382 (DLHPHKHHSHEQHPHGHHPHAHHPHEHDTHRQHPH) is necessary for endothelial cell focal adhesions and anti-angiogenic activities. 2 stretches are compositionally biased toward basic residues: residues 351–371 (PHKH…AHHP) and 379–407 (QHPH…HHPH).

As to quaternary structure, interacts (via the HRR domain) with TPM1; the interaction appears to contribute to the antiangiogenic properties of the HRR domain. Interacts with THBS2; the interaction blocks the antiangiogenic effect of THBS2 with CD36. Interacts with THBS1 (via the TSP type I repeats); the interaction blocks the antiangiogenic effect of THBS1 with CD3. Interacts with PLG (via its Kringle domains); the interaction tethers PLG to the cell surface and enhances its activation. Interacts with HPSE; the interaction is enhanced at acidic pH, partially inhibits binding of HPSE to cell surface receptors and modulates its enzymatic activity. Interacts (via the HRR domain) with TMP1; the interaction partially mediates the antiangiogenic properties of HRG. Interacts with kappa and lambda light chains of IgG molecules. Interacts with ATP5F1A; the interaction occurs on the surface of T-cells and alters their cell morphology in concert with CONA. Binds IgG molecules containing kappa and lambda light chains and inhibits the formation of insoluble immunoglobulin complexes. Interacts with F12; the interaction, which is enhanced in the presence of zinc ions and inhibited by heparin-binding to HRG, inhibits factor XII autoactivation and contact-initiated coagulation. Zn(2+) serves as cofactor. Post-translationally, proteolytic cleavage produces several HRG fragments which are mostly disulfide-linked and, therefore, not released. Cleavage by plasmin is inhibited in the presence of heparin, zinc ions or in an acidic environment. Cleavage reduces binding of HRG to heparan sulfate, but enhances the ability of HRG to bind and tether plasminogen to the cell surface. On platelet activation, releases a 33 kDa antiangiogenic peptide which encompasses the HRR. Also cleaved in the C-terminal by plasmin. N-glycosylated. Expressed in macrophages and in malignant cells. Expressed by the liver and secreted in plasma (at protein level).

The protein localises to the secreted. Functionally, plasma glycoprotein that binds a number of ligands such as heme, heparin, heparan sulfate, thrombospondin, plasminogen, and divalent metal ions. Binds heparin and heparin/glycosaminoglycans in a zinc-dependent manner. Binds heparan sulfate on the surface of liver, lung, kidney and heart endothelial cells. Binds to N-sulfated polysaccharide chains on the surface of liver endothelial cells. Inhibits rosette formation. Acts as an adapter protein and is implicated in regulating many processes such as immune complex and pathogen clearance, cell chemotaxis, cell adhesion, angiogenesis, coagulation and fibrinolysis. Mediates clearance of necrotic cells through enhancing the phagocytosis of necrotic cells in a heparan sulfate-dependent pathway. This process can be regulated by the presence of certain HRG ligands such as heparin and zinc ions. Binds to IgG subclasses of immunoglobins containing kappa and lambda light chains with different affinities regulating their clearance and inhibiting the formation of insoluble immune complexes. Tethers plasminogen to the cell surface. Binds T-cells and alters the cell morphology. Modulates angiogenesis by blocking the CD6-mediated antiangiongenic effect of thrombospondins, THBS1 and THBS2. Acts as a regulator of the vascular endothelial growth factor (VEGF) signaling pathway; inhibits endothelial cell motility by reducing VEGF-induced complex formation between PXN/paxillin and ILK/integrin-linked protein kinase and by promoting inhibition of VEGF-induced tyrosine phosphorylation of focal adhesion kinases and alpha-actinins in endothelial cells. Also plays a role in the regulation of tumor angiogenesis and tumor immune surveillance. Normalizes tumor vessels and promotes antitumor immunity by polarizing tumor-associated macrophages, leading to decreased tumor growth and metastasis. In Homo sapiens (Human), this protein is Histidine-rich glycoprotein (HRG).